A 55-amino-acid chain; its full sequence is Cortexin domain containing 2 (55 aa).

Residues 16–36 (FAIAFVVLLFLFLIVMIFRCA) traverse the membrane as a helical segment.

The protein resides in the membrane. The sequence is that of Cortexin domain containing 2 from Homo sapiens (Human).